A 194-amino-acid polypeptide reads, in one-letter code: Molybdenum cofactor guanylyltransferase (194 aa).

Residues 12-14 (LAG), Lys25, Asn53, Asp70, and Asp100 each bind GTP. Asp100 is a Mg(2+) binding site.

The protein belongs to the MobA family. As to quaternary structure, monomer. It depends on Mg(2+) as a cofactor.

Its subcellular location is the cytoplasm. The enzyme catalyses Mo-molybdopterin + GTP + H(+) = Mo-molybdopterin guanine dinucleotide + diphosphate. Its function is as follows. Transfers a GMP moiety from GTP to Mo-molybdopterin (Mo-MPT) cofactor (Moco or molybdenum cofactor) to form Mo-molybdopterin guanine dinucleotide (Mo-MGD) cofactor. The chain is Molybdenum cofactor guanylyltransferase from Vibrio atlanticus (strain LGP32) (Vibrio splendidus (strain Mel32)).